The sequence spans 113 residues: Hydrogenase maturation factor HypA (113 aa).

H2 lines the Ni(2+) pocket. 4 residues coordinate Zn(2+): C73, C76, C89, and C92.

It belongs to the HypA/HybF family.

In terms of biological role, involved in the maturation of [NiFe] hydrogenases. Required for nickel insertion into the metal center of the hydrogenase. This chain is Hydrogenase maturation factor HypA, found in Rhodopseudomonas palustris (strain TIE-1).